Here is a 540-residue protein sequence, read N- to C-terminus: Cytochrome P450 monooxygenase CYP3 (540 aa).

An N-linked (GlcNAc...) asparagine glycan is attached at asparagine 2. Residues 26–46 (IFGLSSSTLVVLVAMIAVSTL) traverse the membrane as a helical segment. 3 N-linked (GlcNAc...) asparagine glycosylation sites follow: asparagine 100, asparagine 210, and asparagine 400. Cysteine 471 contacts heme.

Belongs to the cytochrome P450 family. Heme serves as cofactor.

It is found in the membrane. Its pathway is secondary metabolite biosynthesis. In terms of biological role, cytochrome P450 monooxygenase; part of the gene cluster that mediates the biosynthesis of itaconic acid and 2-hydroxyparaconate. Cis-aconitate is secreted by the mitochondrial tricarboxylate transporter MTT1. In the cytosol cis-aconitate is converted into trans-aconitate via isomerization by the aconitate-delta-isomerase ADI1. Decarboxylation of trans-aconitate by the trans-aconitate decarboxylase TAD1 then leads then to the production of itaconic acid. The cytochrome P450 monooxygenase CYP3 further converts itaconate to 2-hydroxyparaconate via oxidation of the double bond, leading to a transient epoxide, which can subsequently be lactonized to produce 2-hydroxyparaconate. Secretion of itaconate and possibly 2-hydroxyparaconate into the medium is mediated by the major facilitator ITP1. The glyoxalase domain-containing protein RDO1 is not involved in the biosynthesis of itaconate and 2-hydroxyparaconate, however, it might play a role in the further conversion of 2-hydroxyparaconate to itatartarate. This is Cytochrome P450 monooxygenase CYP3 from Mycosarcoma maydis (Corn smut fungus).